The primary structure comprises 341 residues: C2 calcium-dependent domain-containing protein 4D (341 aa).

Over residues 56–71 the composition is skewed to basic and acidic residues; it reads RLRDPRGAEGRVDRNP. Disordered regions lie at residues 56-75 and 134-176; these read RLRD…GGRN and CRAP…PYAP. The segment covering 139–149 has biased composition (low complexity); it reads SDTASSPDSSP. Residues 205–331 enclose the C2 domain; sequence RGGQLRLSTE…PPLAGGLGPG (127 aa).

This chain is C2 calcium-dependent domain-containing protein 4D (C2cd4d), found in Mus musculus (Mouse).